The sequence spans 318 residues: L-lactate dehydrogenase (318 aa).

Residues V18, D39, K44, Y69, and 83–84 (GA) each bind NAD(+). Q86 and R92 together coordinate substrate. NAD(+) is bound by residues S105, 122 to 124 (VSN), and S147. 124 to 127 (NPVD) contributes to the substrate binding site. Substrate is bound at residue 152–155 (DTSR). H179 acts as the Proton acceptor in catalysis. Position 225 is a phosphotyrosine (Y225). Residue T234 participates in substrate binding.

It belongs to the LDH/MDH superfamily. LDH family. In terms of assembly, homotetramer.

The protein resides in the cytoplasm. The catalysed reaction is (S)-lactate + NAD(+) = pyruvate + NADH + H(+). It functions in the pathway fermentation; pyruvate fermentation to lactate; (S)-lactate from pyruvate: step 1/1. Functionally, catalyzes the conversion of lactate to pyruvate. This Clostridium botulinum (strain Langeland / NCTC 10281 / Type F) protein is L-lactate dehydrogenase.